The sequence spans 134 residues: Late embryogenesis abundant protein 6 (134 aa).

The segment covering 31–45 (ERAMARTKEEKEIAH) has biased composition (basic and acidic residues). Disordered regions lie at residues 31–53 (ERAMARTKEEKEIAHQRRKAKEA) and 80–134 (VTDH…HHHY). Residues 34 to 70 (MARTKEEKEIAHQRRKAKEAEANMDMHMAKAAHAEDK) are a coiled coil. The span at 115–127 (PPQTYHPTYPPTG) shows a compositional bias: low complexity.

It belongs to the LEA type 1 family.

Functionally, involved dehydration tolerance. Involved in the adaptive response of vascular plants to withstand water deficit. May possess chaperone-like activity under water deficit. In Arabidopsis thaliana (Mouse-ear cress), this protein is Late embryogenesis abundant protein 6.